The chain runs to 245 residues: Pyridoxine 5'-phosphate synthase (245 aa).

N7 serves as a coordination point for 3-amino-2-oxopropyl phosphate. Position 9–10 (9–10 (DH)) interacts with 1-deoxy-D-xylulose 5-phosphate. R18 lines the 3-amino-2-oxopropyl phosphate pocket. H43 (proton acceptor) is an active-site residue. Residues R45 and H50 each coordinate 1-deoxy-D-xylulose 5-phosphate. E70 acts as the Proton acceptor in catalysis. Residue T100 coordinates 1-deoxy-D-xylulose 5-phosphate. Residue H190 is the Proton donor of the active site. Residues G191 and 212–213 (GH) contribute to the 3-amino-2-oxopropyl phosphate site.

The protein belongs to the PNP synthase family. In terms of assembly, homooctamer; tetramer of dimers.

The protein localises to the cytoplasm. The catalysed reaction is 3-amino-2-oxopropyl phosphate + 1-deoxy-D-xylulose 5-phosphate = pyridoxine 5'-phosphate + phosphate + 2 H2O + H(+). It functions in the pathway cofactor biosynthesis; pyridoxine 5'-phosphate biosynthesis; pyridoxine 5'-phosphate from D-erythrose 4-phosphate: step 5/5. In terms of biological role, catalyzes the complicated ring closure reaction between the two acyclic compounds 1-deoxy-D-xylulose-5-phosphate (DXP) and 3-amino-2-oxopropyl phosphate (1-amino-acetone-3-phosphate or AAP) to form pyridoxine 5'-phosphate (PNP) and inorganic phosphate. In Prochlorococcus marinus (strain NATL1A), this protein is Pyridoxine 5'-phosphate synthase.